The chain runs to 70 residues: MQQGIHPDYHPVEVTCSCGNTFVTRTAGKEDHMFVDVCSQCHPFYTGKQKILDTGGRVARFEKRYGKKSK.

The Zn(2+) site is built by Cys16, Cys18, Cys38, and Cys41.

It belongs to the bacterial ribosomal protein bL31 family. Type A subfamily. As to quaternary structure, part of the 50S ribosomal subunit. It depends on Zn(2+) as a cofactor.

Its function is as follows. Binds the 23S rRNA. This Bifidobacterium longum (strain DJO10A) protein is Large ribosomal subunit protein bL31.